The primary structure comprises 207 residues: Ras-related protein Rab-8A (207 aa).

GTP-binding residues include Ser17, Gly18, Val19, Gly20, Lys21, Thr22, Cys23, Ser35, Ser39, and Thr40. Thr22 lines the Mg(2+) pocket. 2 consecutive short sequence motifs (switch) follow at residues Asp31–Phe45 and Asp63–Gly80. 2 residues coordinate Mg(2+): Thr40 and Asp63. Gly66 contacts GTP. At Thr72 the chain carries Phosphothreonine. The GTP site is built by Asn121, Lys122, Asp124, Ala152, and Lys153. 2 positions are modified to phosphoserine: Ser181 and Ser185. Position 204 is a cysteine methyl ester (Cys204). Cys204 carries the S-geranylgeranyl cysteine lipid modification. A propeptide spans Val205–Leu207 (removed in mature form).

It belongs to the small GTPase superfamily. Rab family. In terms of assembly, interacts (GTP-bound form) with MICALL1; regulates RAB8A association with recycling endosomes. Interacts with MICALL2; competes with RAB13 and is involved in E-cadherin endocytic recycling. Interacts (GTP-bound form) with MICAL1, MICALCL, MICAL3, EHBP1 and EHBP1L1; at least in case of MICAL1, MICALCL, MICAL3 and EHBP1L1 two molecules of RAB8A can bind to one molecule of the effector protein; ternary complexes of RAB8A, RAB13 and either MICAL1 or EHBP1L1 are possible. Interacts with EHD1. Interacts with MAP4K2 and SYTL4. Interacts with SGSM1 and SGSM3. Interacts with RABIF, RIMS2, RPH3A and RPH3A. Interacts with OPTN. Interacts with RAB3IP, RAB3IP functions as guanine exchange factor (GEF). Interacts with MYO5B. Interacts with CIMAP3. Interacts with BIRC6/bruce. Interacts with OCRL. Interacts with AHI1. Interacts with DCDC1. Interacts with LRRK2; interaction facilitates phosphorylation of Thr-72. Interacts with RAB31P, GDI1, GDI2, CHM, CHML, RABGGTA, RABGGTB, TBC1D15 and INPP5B; these interactions are dependent on Thr-72 not being phosphorylated. Interacts with RILPL1 and RILPL2; these interactions are dependent on the phosphorylation of Thr-72 by LRRK2. Interacts with DZIP1; prevents inhibition by the GDP-dissociation inhibitor GDI2. Interacts (in GDP-bound form) with RAB3IP/Rabin8, RAB3IP functions as guanine exchange factor (GEF) towards RAB8A. Interacts (in GDP-bound form) with RPGR, RPGR functions as GEF towards RAB8A. The cofactor is Mg(2+). Phosphorylation of Thr-72 in the switch II region by LRRK2 prevents the association of RAB regulatory proteins, including CHM, CHML and RAB GDP dissociation inhibitors GDI1 and GDI2. Phosphorylation by LRRK2 is required for localization to stressed lysosomes.

The protein localises to the cell membrane. Its subcellular location is the golgi apparatus. The protein resides in the endosome membrane. It is found in the recycling endosome membrane. It localises to the cell projection. The protein localises to the cilium. Its subcellular location is the cytoplasmic vesicle. The protein resides in the phagosome membrane. It is found in the cytoplasm. It localises to the cytoskeleton. The protein localises to the microtubule organizing center. Its subcellular location is the centrosome. The protein resides in the centriole. It is found in the cilium basal body. It localises to the midbody. The protein localises to the lysosome. The catalysed reaction is GTP + H2O = GDP + phosphate + H(+). With respect to regulation, regulated by guanine nucleotide exchange factors (GEFs) such as RAB3IP/Rabin8 and RPGR which promote the exchange of bound GDP for free GTP, GTPase activating proteins (GAPs) which increase the GTP hydrolysis activity, and GDP dissociation inhibitors (GDIs) which inhibit the dissociation of the nucleotide from the GTPase. Activated in response to insulin. In terms of biological role, the small GTPases Rab are key regulators of intracellular membrane trafficking, from the formation of transport vesicles to their fusion with membranes. Rabs cycle between an inactive GDP-bound form and an active GTP-bound form that is able to recruit to membranes different sets of downstream effectors directly responsible for vesicle formation, movement, tethering and fusion. RAB8A is involved in polarized vesicular trafficking and neurotransmitter release. Together with RAB11A, RAB3IP, the exocyst complex, PARD3, PRKCI, ANXA2, CDC42 and DNMBP promotes transcytosis of PODXL to the apical membrane initiation sites (AMIS), apical surface formation and lumenogenesis. Regulates the compacted morphology of the Golgi. Together with MYO5B and RAB11A participates in epithelial cell polarization. Also involved in membrane trafficking to the cilium and ciliogenesis. Together with MICALL2, may also regulate adherens junction assembly. May play a role in insulin-induced transport to the plasma membrane of the glucose transporter GLUT4 and therefore play a role in glucose homeostasis. Involved in autophagy. Participates in the export of a subset of neosynthesized proteins through a Rab8-Rab10-Rab11-dependent endososomal export route. Targeted to and stabilized on stressed lysosomes through LRRK2 phosphorylation. Suppresses stress-induced lysosomal enlargement through EHBP1 and EHNP1L1 effector proteins. The protein is Ras-related protein Rab-8A (RAB8A) of Bos taurus (Bovine).